Here is a 506-residue protein sequence, read N- to C-terminus: Xaa-Pro aminopeptidase 3 (506 aa).

Residues 1–31 (MLSLLSTPRLVPVIARLRGLSGCMSCLQRRY) constitute a mitochondrion transit peptide. Positions 54-79 (HPHLLRPGEVTPGLSQVEYALRRHKL) are interaction with TNFRSF1B. 7 residues coordinate substrate: tyrosine 300, aspartate 331, aspartate 342, histidine 423, histidine 430, glutamate 450, and glutamate 474. Residues aspartate 331, aspartate 342, and histidine 423 each coordinate Mn(2+). Mn(2+) is bound by residues glutamate 450 and glutamate 474.

The protein belongs to the peptidase M24B family. As to quaternary structure, homodimer. Interacts with TNFRSF1B/TNFR2 (activated) and TRAF2. The cofactor is Mn(2+). In terms of tissue distribution, expressed in the kidney, specifically in intercalated cells, but not in principal cells, of the distal convoluted tubule and cortical collecting duct (at protein level).

The protein resides in the mitochondrion. It localises to the cytoplasm. It catalyses the reaction Release of any N-terminal amino acid, including proline, that is linked to proline, even from a dipeptide or tripeptide.. Functionally, catalyzes the removal of a penultimate prolyl residue from the N-termini of peptides, such as Leu-Pro-Ala. Also shows low activity towards peptides with Ala or Ser at the P1 position. Promotes TNFRSF1B-mediated phosphorylation of MAPK8/JNK1 and MAPK9/JNK2, suggesting a function as an adapter protein for TNFRSF1B; the effect is independent of XPNPEP3 peptidase activity. May inhibit apoptotic cell death induced via TNF-TNFRSF1B signaling. The sequence is that of Xaa-Pro aminopeptidase 3 (Xpnpep3) from Rattus norvegicus (Rat).